Consider the following 412-residue polypeptide: Docking protein 2 (412 aa).

The region spanning 4-114 is the PH domain; the sequence is GAVKQGFLYL…WVQAICLLAF (111 aa). The IRS-type PTB domain occupies 147-252; it reads PHKEFAVTMR…SAQKNAAPAT (106 aa). The interval 246 to 296 is disordered; it reads KNAAPATPQPQPATIPASLPRPDSPYSRPHDSLPPPSPTTPVPAPRPRGQE. Tyrosine 271 is modified (phosphotyrosine). Pro residues predominate over residues 277 to 291; the sequence is SLPPPSPTTPVPAPR. Residues tyrosine 299 and tyrosine 345 each carry the phosphotyrosine modification. The tract at residues 359-412 is disordered; it reads SPQEPRGEAWRRQATADRDPAGLQHVQPAGQDFSASGWQPGTEYDNVVLKKGPK. Positions 361 to 378 are enriched in basic and acidic residues; that stretch reads QEPRGEAWRRQATADRDP.

Belongs to the DOK family. Type A subfamily. As to quaternary structure, interacts with phosphorylated RASGAP and EGFR. Interacts with RET and NCK. Interacts (via PH domain) with TEK/TIE2 (tyrosine phosphorylated). In terms of assembly, (Microbial infection) Interacts with Herpes simplex virus 1 (HHV-1) protein UL46; this interaction induces DOK2 phosphorylation and subsequent degradation. On immunoreceptor stimulation, phosphorylated on C-terminal tyrosine residues. Phosphorylation on Tyr-345 is required for binding to the SH2 domain of NCK. Phosphorylation on both Tyr-271 and Tyr-299 is required for interaction with RASGAP. Phosphorylated on tyrosine residues by TEK/TIE2. Highly expressed in peripheral blood leukocytes, lymph nodes and spleen. Lower expression in thymus, bone marrow and fetal liver.

In terms of biological role, DOK proteins are enzymatically inert adaptor or scaffolding proteins. They provide a docking platform for the assembly of multimolecular signaling complexes. DOK2 may modulate the cellular proliferation induced by IL-4, as well as IL-2 and IL-3. May be involved in modulating Bcr-Abl signaling. Attenuates EGF-stimulated MAP kinase activation. This chain is Docking protein 2 (DOK2), found in Homo sapiens (Human).